Reading from the N-terminus, the 452-residue chain is Chromosomal replication initiator protein DnaA (452 aa).

The domain I, interacts with DnaA modulators stretch occupies residues 1–80 (MSSTVSTLWR…NNDQFMVKIQ (80 aa)). Positions 80–114 (QDGIKPTEKTTTNVEQKTQNENCHNEITSQQNYRS) are domain II. The tract at residues 115-332 (YLNKNHVFDN…GALNRVHAHA (218 aa)) is domain III, AAA+ region. ATP-binding residues include glycine 160, glycine 162, lysine 163, and threonine 164. A domain IV, binds dsDNA region spans residues 333–452 (EFTGKAITID…WSNLIRTLSV (120 aa)).

This sequence belongs to the DnaA family. As to quaternary structure, oligomerizes as a right-handed, spiral filament on DNA at oriC.

The protein resides in the cytoplasm. Functionally, plays an essential role in the initiation and regulation of chromosomal replication. ATP-DnaA binds to the origin of replication (oriC) to initiate formation of the DNA replication initiation complex once per cell cycle. Binds the DnaA box (a 9 base pair repeat at the origin) and separates the double-stranded (ds)DNA. Forms a right-handed helical filament on oriC DNA; dsDNA binds to the exterior of the filament while single-stranded (ss)DNA is stabiized in the filament's interior. The ATP-DnaA-oriC complex binds and stabilizes one strand of the AT-rich DNA unwinding element (DUE), permitting loading of DNA polymerase. After initiation quickly degrades to an ADP-DnaA complex that is not apt for DNA replication. Binds acidic phospholipids. The chain is Chromosomal replication initiator protein DnaA from Histophilus somni (strain 129Pt) (Haemophilus somnus).